The chain runs to 265 residues: Isoprenyl transferase (265 aa).

Residue D35 is part of the active site. Residue D35 participates in Mg(2+) binding. Substrate-binding positions include 36 to 39, W40, R48, H52, and 80 to 82; these read GNGR and STE. N83 serves as the catalytic Proton acceptor. Substrate-binding positions include W84, R86, R203, and 209-211; that span reads RIS. E222 serves as a coordination point for Mg(2+).

This sequence belongs to the UPP synthase family. Homodimer. The cofactor is Mg(2+).

Its function is as follows. Catalyzes the condensation of isopentenyl diphosphate (IPP) with allylic pyrophosphates generating different type of terpenoids. The chain is Isoprenyl transferase from Prochlorococcus marinus (strain MIT 9313).